A 1332-amino-acid chain; its full sequence is MLDVNLFDELRIGLATADDIRRWSHGEVKKPETINYRTLKPEKDGLFCERIFGPTRDWECACGKYKRVRYKGIVCERCGVEVTKSKVRRERMGHIELAAPVTHIWYFKGVPSRLGYLLDLAPKDLEKIIYFAANIITSVDEEARHTDQETLEADIFMEKKEVEADRDEELAERQQKLEEDLKELESNGAKADAKRKVQNAAEREMRHIRERAEREIDRLDEIWNTFIKLAPKQMIVDETIYSELVDRYEDYFTGGMGAEAIQTLIKNFDLEAEAEKLSEVIRDGKGQKQVRALKRLRVVAAFLRSGNDPAAMVLDAIPVIPPELRPMVQLDGGRFATSDLNDLYRRVINRNNRLKRMIDLGAPEIIVNNEKRMLQESVDALFDNGRRGRPVTGPGNRPLKSLSDLLKGKQGRFRQNLLGKRVDYSGRSVIIVGPQLKLHQCGLPKLMALELFKPFVMKRLVEKSYAQNIRSAKRMVERQRPEVWDVLEEAIAEHPVMLNRAPTLHRLGIQAFEPVLVEGKAIQLHPLACEAFNADFDGDQMAVHLPLSAEAQAEARVLMLASNNILSPASGKPLAMPRLDMVTGLYFLTLEKSEDQLGGEGAYHEADENGPKRGTYSSFAEALMARDRGVLGLQAPIEVRISHLRPPEDIEAELFPDGWQRGQKWTAHTTLGRIMFNELLPWNYPFVNGVMAKKAQAVIINDLAARYPMITVAQTVDKMKDAGFYWATRSCVTISMDDVLVLPNKEEILQRYEKQAATIEKKLARGKINNEERYRSLVDLWKECTDFVGESVEKIYPDDNPIPMIVKSGAAGNMRQIWTLAGMKGMVTNSRGDYITRPIKTSFREGLSVLEYFNNSHGSRKGLADTALRTADSGYLTRRLVDVAQDVIVREDDCGTRKGLEVDVAKPVLDAEGNETGEFTRAEFLETALIGRYLAKDAVNDNGDVIYERGAFVGDAEAKKMVAEGVRTATVRTVMMCETATGVCATCYGRSMATGQKVDIGEAVGIVAAQSIGEPGTQLTMRTFHQGGVGGDITGGLPRVQELFEARVPKNQAPIASTEGTIKLEDDGNFYTLTITPDNGEDEVVYEKLSKRQGLAVTQEPGGFEHQLRTGDHVVTGQPLLRGAPDPHEVLRVEGVTGVQKHLIEQVQKVYRDQGVAIHDKHIEIIVRQMLRRLTVVDSGSTELLPGSLIDRNEARAINKAVATNGGEGAAFRQEIMGITKASLATESWLSAASFQETTRVLTDAAINKRSDKLIGLKENVIIGKLIPAGTGISRYRNISVEPTEEARAQAFSMNTSYGDGFYGEDGAYGEFTGAAVRLDDQGFDGGFGDIS.

Zn(2+) is bound by residues Cys-60, Cys-62, Cys-75, and Cys-78. Mg(2+) is bound by residues Asp-535, Asp-537, and Asp-539. Zn(2+) contacts are provided by Cys-894, Cys-977, Cys-984, and Cys-987.

It belongs to the RNA polymerase beta' chain family. The RNAP catalytic core consists of 2 alpha, 1 beta, 1 beta' and 1 omega subunit. When a sigma factor is associated with the core the holoenzyme is formed, which can initiate transcription. It depends on Mg(2+) as a cofactor. Zn(2+) is required as a cofactor.

It catalyses the reaction RNA(n) + a ribonucleoside 5'-triphosphate = RNA(n+1) + diphosphate. In terms of biological role, DNA-dependent RNA polymerase catalyzes the transcription of DNA into RNA using the four ribonucleoside triphosphates as substrates. The chain is DNA-directed RNA polymerase subunit beta' from Corynebacterium kroppenstedtii (strain DSM 44385 / JCM 11950 / CIP 105744 / CCUG 35717).